The sequence spans 419 residues: Carboxypeptidase A1 (419 aa).

Positions 1-16 are cleaved as a signal peptide; it reads MWGLLIFSVLLGGVLA. Positions 17–110 are cleaved as a propeptide — activation peptide; the sequence is KEDFVGHQVL…QEQMFASQGR (94 aa). The Peptidase M14 domain maps to 121–414; sequence TYHTLEEIYD…LALLTIMEHT (294 aa). Residues histidine 179 and glutamate 182 each coordinate Zn(2+). Substrate-binding positions include 179-182, arginine 237, and 254-255; these read HSRE and NR. A disulfide bond links cysteine 248 and cysteine 271. Histidine 306 lines the Zn(2+) pocket. Substrate-binding positions include 307-308 and tyrosine 358; that span reads SY. The active-site Proton donor/acceptor is the glutamate 380.

Belongs to the peptidase M14 family. As to quaternary structure, monomer. May form a complex with proelastase 2. The cofactor is Zn(2+).

The protein resides in the secreted. The catalysed reaction is Release of a C-terminal amino acid, but little or no action with -Asp, -Glu, -Arg, -Lys or -Pro.. It catalyses the reaction leukotriene C4 + H2O = leukotriene F4 + glycine. Carboxypeptidase that catalyzes the release of a C-terminal amino acid, but has little or no action with -Asp, -Glu, -Arg, -Lys or -Pro. Catalyzes the conversion of leukotriene C4 to leukotriene F4 via the hydrolysis of an amide bond. The sequence is that of Carboxypeptidase A1 (CPA1) from Sus scrofa (Pig).